A 372-amino-acid polypeptide reads, in one-letter code: Chaperone protein DnaJ (372 aa).

The region spanning 5–70 (DYYDLLEVGR…EKRAGYDRYG (66 aa)) is the J domain. The CR-type zinc finger occupies 134-212 (GIQAPIHYVT…CGGSGRRRDE (79 aa)). Zn(2+) contacts are provided by C147, C150, C164, C167, C186, C189, C200, and C203. CXXCXGXG motif repeat units lie at residues 147-154 (CDTCQGTG), 164-171 (CHTCQGSG), 186-193 (CTTCYGEG), and 200-207 (CKKCGGSG).

This sequence belongs to the DnaJ family. As to quaternary structure, homodimer. Requires Zn(2+) as cofactor.

It is found in the cytoplasm. In terms of biological role, participates actively in the response to hyperosmotic and heat shock by preventing the aggregation of stress-denatured proteins and by disaggregating proteins, also in an autonomous, DnaK-independent fashion. Unfolded proteins bind initially to DnaJ; upon interaction with the DnaJ-bound protein, DnaK hydrolyzes its bound ATP, resulting in the formation of a stable complex. GrpE releases ADP from DnaK; ATP binding to DnaK triggers the release of the substrate protein, thus completing the reaction cycle. Several rounds of ATP-dependent interactions between DnaJ, DnaK and GrpE are required for fully efficient folding. Also involved, together with DnaK and GrpE, in the DNA replication of plasmids through activation of initiation proteins. The polypeptide is Chaperone protein DnaJ (Wolbachia pipientis wMel).